The primary structure comprises 442 residues: Trigger factor (442 aa).

The region spanning 165-250 is the PPIase FKBP-type domain; sequence DDTAQIDFEG…LHKILQKELP (86 aa).

Belongs to the FKBP-type PPIase family. Tig subfamily.

The protein localises to the cytoplasm. It catalyses the reaction [protein]-peptidylproline (omega=180) = [protein]-peptidylproline (omega=0). In terms of biological role, involved in protein export. Acts as a chaperone by maintaining the newly synthesized protein in an open conformation. Functions as a peptidyl-prolyl cis-trans isomerase. The polypeptide is Trigger factor (Helicobacter hepaticus (strain ATCC 51449 / 3B1)).